A 153-amino-acid polypeptide reads, in one-letter code: MAVKVVTENRRARHEYHILETFEAGLALRGTEVKSLRAGKASLQDSFARVENGELLLYNMHISPYEQGNQFNHEPKRTRRLLMHKYEILRLMGKTREKGLALIPLKVYFKNGLAKIELALAKGKKIYDRREDIASRDARREIDRAIKERMRLH.

This sequence belongs to the SmpB family.

It is found in the cytoplasm. Functionally, required for rescue of stalled ribosomes mediated by trans-translation. Binds to transfer-messenger RNA (tmRNA), required for stable association of tmRNA with ribosomes. tmRNA and SmpB together mimic tRNA shape, replacing the anticodon stem-loop with SmpB. tmRNA is encoded by the ssrA gene; the 2 termini fold to resemble tRNA(Ala) and it encodes a 'tag peptide', a short internal open reading frame. During trans-translation Ala-aminoacylated tmRNA acts like a tRNA, entering the A-site of stalled ribosomes, displacing the stalled mRNA. The ribosome then switches to translate the ORF on the tmRNA; the nascent peptide is terminated with the 'tag peptide' encoded by the tmRNA and targeted for degradation. The ribosome is freed to recommence translation, which seems to be the essential function of trans-translation. This is SsrA-binding protein from Pelotomaculum thermopropionicum (strain DSM 13744 / JCM 10971 / SI).